The sequence spans 106 residues: Venom family 8-like peptide Pr8a (106 aa).

The N-terminal stretch at 1 to 17 is a signal peptide; sequence MSPIAFLLPFLLQMVLS.

Contains 2 disulfide bonds. In terms of tissue distribution, expressed by the venom gland (anterior main gland) (at protein level).

Its subcellular location is the secreted. The protein is Venom family 8-like peptide Pr8a of Platymeris rhadamanthus (Red spot assassin bug).